A 105-amino-acid chain; its full sequence is Large ribosomal subunit protein P1 (105 aa).

Blocked amino end (Met) is present on methionine 1. Residues valine 65–alanine 76 are compositionally biased toward low complexity. The tract at residues valine 65–glycine 105 is disordered. The span at alanine 77–serine 92 shows a compositional bias: basic and acidic residues.

The protein belongs to the eukaryotic ribosomal protein P1/P2 family. In terms of assembly, part of the 50S ribosomal subunit. Homodimer, it forms part of the ribosomal stalk which helps the ribosome interact with GTP-bound translation factors. Forms a heptameric uL10/P0(P1)2(P1)2(P1)2 complex, where uL10/P0 forms an elongated spine to which the P1 dimers bind in a sequential fashion.

In terms of biological role, forms part of the ribosomal stalk, playing a central role in the interaction of the ribosome with GTP-bound translation factors. This Sulfolobus acidocaldarius (strain ATCC 33909 / DSM 639 / JCM 8929 / NBRC 15157 / NCIMB 11770) protein is Large ribosomal subunit protein P1.